The sequence spans 230 residues: Ribonuclease 3 (230 aa).

Residues 5–125 (YSRFYNILGY…VIGAIYLDSD (121 aa)) enclose the RNase III domain. Glu-40 contacts Mg(2+). The active site involves Asp-44. Residues Asp-111 and Glu-114 each coordinate Mg(2+). Residue Glu-114 is part of the active site. Residues 153–223 (DSKSKLQEIL…AEKMIEMLSQ (71 aa)) enclose the DRBM domain.

This sequence belongs to the ribonuclease III family. Homodimer. Mg(2+) is required as a cofactor.

The protein localises to the cytoplasm. The catalysed reaction is Endonucleolytic cleavage to 5'-phosphomonoester.. Functionally, digests double-stranded RNA. Involved in the processing of primary rRNA transcript to yield the immediate precursors to the large and small rRNAs (23S and 16S). Processes some mRNAs, and tRNAs when they are encoded in the rRNA operon. Processes pre-crRNA and tracrRNA of type II CRISPR loci if present in the organism. This chain is Ribonuclease 3, found in Francisella tularensis subsp. holarctica (strain OSU18).